The sequence spans 468 residues: UDP-N-acetylmuramate--L-alanine ligase (468 aa).

107–113 (GTHGKTT) contributes to the ATP binding site.

It belongs to the MurCDEF family.

Its subcellular location is the cytoplasm. The catalysed reaction is UDP-N-acetyl-alpha-D-muramate + L-alanine + ATP = UDP-N-acetyl-alpha-D-muramoyl-L-alanine + ADP + phosphate + H(+). It participates in cell wall biogenesis; peptidoglycan biosynthesis. In terms of biological role, cell wall formation. The polypeptide is UDP-N-acetylmuramate--L-alanine ligase (Roseiflexus sp. (strain RS-1)).